The chain runs to 126 residues: Profilin (126 aa).

Belongs to the profilin family. In terms of assembly, occurs in many kinds of cells as a complex with monomeric actin in a 1:1 ratio. In terms of tissue distribution, expressed in ovary and head.

It is found in the cytoplasm. Its subcellular location is the cytoskeleton. Functionally, binds to actin and affects the structure of the cytoskeleton. At high concentrations, profilin prevents the polymerization of actin, whereas it enhances it at low concentrations. By binding to PIP2, it may inhibit the formation of IP3 and DG. This profilin is required for intercellular cytoplasm transport during Drosophila oogenesis. Function in neurons is essential for adult survival, and is important for climbing behavior and activity. The chain is Profilin (chic) from Drosophila melanogaster (Fruit fly).